The following is a 171-amino-acid chain: uncharacterized protein (171 aa).

The region spanning 3–171 (KKVAIILANE…FNREIVKQLQ (169 aa)) is the PfpI endopeptidase domain.

Belongs to the peptidase C56 family.

This is an uncharacterized protein from Staphylococcus aureus (strain COL).